The primary structure comprises 53 residues: uncharacterized protein (53 aa).

This is an uncharacterized protein from Haemophilus influenzae (strain ATCC 51907 / DSM 11121 / KW20 / Rd).